A 177-amino-acid chain; its full sequence is Large ribosomal subunit protein uL6 (177 aa).

The protein belongs to the universal ribosomal protein uL6 family. In terms of assembly, part of the 50S ribosomal subunit.

Functionally, this protein binds to the 23S rRNA, and is important in its secondary structure. It is located near the subunit interface in the base of the L7/L12 stalk, and near the tRNA binding site of the peptidyltransferase center. This is Large ribosomal subunit protein uL6 from Shewanella frigidimarina (strain NCIMB 400).